The following is a 241-amino-acid chain: uncharacterized protein (241 aa).

This is an uncharacterized protein from Ictaluridae (bullhead catfishes).